The chain runs to 702 residues: Ribosomal RNA large subunit methyltransferase K/L (702 aa).

A THUMP domain is found at Leu43 to Leu154.

The protein belongs to the methyltransferase superfamily. RlmKL family.

The protein localises to the cytoplasm. It carries out the reaction guanosine(2445) in 23S rRNA + S-adenosyl-L-methionine = N(2)-methylguanosine(2445) in 23S rRNA + S-adenosyl-L-homocysteine + H(+). The catalysed reaction is guanosine(2069) in 23S rRNA + S-adenosyl-L-methionine = N(2)-methylguanosine(2069) in 23S rRNA + S-adenosyl-L-homocysteine + H(+). Specifically methylates the guanine in position 2445 (m2G2445) and the guanine in position 2069 (m7G2069) of 23S rRNA. The protein is Ribosomal RNA large subunit methyltransferase K/L of Shigella flexneri serotype 5b (strain 8401).